The following is a 293-amino-acid chain: MNAIANLAATPRADLGECLADLAVDALIDEAELSPKPALVDRRGNGAHADLHLGLMQASALSLWPCFKEMADAAQRHARIDARLRGVLGQLGREGEVAMLRTTEGVNSHRGAIWALGLLVAAAALAPRRTQAGEVAARAGRIALLDDPAAASGDSHGERVRRRYGVGGAREEARLGFPRAVRHGLPQLWRSRESGAGEQNARLDALLAIMSVLDDTCVLHRAGRVGLAAMQEGARAVLAAGGSASLAGRRRLRELDRRLLALNASPGGAADLLAACLFLDRLPAALGGWAGSL.

It belongs to the CitG/MdcB family.

The catalysed reaction is 3'-dephospho-CoA + ATP = 2'-(5''-triphospho-alpha-D-ribosyl)-3'-dephospho-CoA + adenine. In terms of biological role, involved in the formation of 2-(5''-phosphoribosyl)-3'-dephosphocoenzyme-A, the prosthetic group of the acyl-carrier protein of the malonate decarboxylase. This chain is Probable 2-(5''-triphosphoribosyl)-3'-dephosphocoenzyme-A synthase, found in Pseudomonas paraeruginosa (strain DSM 24068 / PA7) (Pseudomonas aeruginosa (strain PA7)).